The following is a 312-amino-acid chain: Bifunctional pinoresinol-lariciresinol reductase 1 (312 aa).

NADP(+) contacts are provided by residues 10 to 16 (GGTGYIG), R35, and K44. The Proton acceptor role is filled by K136. Residue R140 coordinates NADP(+). H268 lines the substrate pocket.

It belongs to the NmrA-type oxidoreductase family. Isoflavone reductase subfamily. As to quaternary structure, dimer. As to expression, expressed in seeds and roots, but not in stems. Detected in leaves.

The enzyme catalyses (-)-lariciresinol + NADP(+) = (-)-pinoresinol + NADPH + H(+). The catalysed reaction is (+)-secoisolariciresinol + NADP(+) = (-)-lariciresinol + NADPH + H(+). Functionally, reductase involved in lignan biosynthesis. Catalyzes the enantioselective conversion of (-)-pinoresinol into (-)-lariciresinol and of (-)-lariciresinol into (+)-secoisolariciresinol. Abstracts the 4R-hydride from the NADPH cofactor during catalysis. The polypeptide is Bifunctional pinoresinol-lariciresinol reductase 1 (PLR_Lu1) (Linum usitatissimum (Flax)).